The primary structure comprises 639 residues: Chaperone protein DnaK (639 aa).

Threonine 198 bears the Phosphothreonine; by autocatalysis mark. The tract at residues 602-639 (QAKSQAQGGDNADAGKQANATADDVVDAEFEEVKDDKK) is disordered. Residues 625-639 (DVVDAEFEEVKDDKK) are compositionally biased toward acidic residues.

This sequence belongs to the heat shock protein 70 family.

In terms of biological role, acts as a chaperone. The protein is Chaperone protein DnaK of Shewanella baltica (strain OS195).